The chain runs to 248 residues: Triosephosphate isomerase (248 aa).

11–13 (NWK) serves as a coordination point for substrate. Histidine 95 (electrophile) is an active-site residue. Glutamate 167 (proton acceptor) is an active-site residue. Substrate is bound by residues glycine 173, serine 212, and 233-234 (GG).

The protein belongs to the triosephosphate isomerase family. Homodimer.

It localises to the cytoplasm. The enzyme catalyses D-glyceraldehyde 3-phosphate = dihydroxyacetone phosphate. It participates in carbohydrate biosynthesis; gluconeogenesis. The protein operates within carbohydrate degradation; glycolysis; D-glyceraldehyde 3-phosphate from glycerone phosphate: step 1/1. In terms of biological role, involved in the gluconeogenesis. Catalyzes stereospecifically the conversion of dihydroxyacetone phosphate (DHAP) to D-glyceraldehyde-3-phosphate (G3P). This chain is Triosephosphate isomerase, found in Ralstonia nicotianae (strain ATCC BAA-1114 / GMI1000) (Ralstonia solanacearum).